The sequence spans 318 residues: Methionyl-tRNA formyltransferase (318 aa).

(6S)-5,6,7,8-tetrahydrofolate is bound at residue 110-113 (SLLP).

It belongs to the Fmt family.

It catalyses the reaction L-methionyl-tRNA(fMet) + (6R)-10-formyltetrahydrofolate = N-formyl-L-methionyl-tRNA(fMet) + (6S)-5,6,7,8-tetrahydrofolate + H(+). In terms of biological role, attaches a formyl group to the free amino group of methionyl-tRNA(fMet). The formyl group appears to play a dual role in the initiator identity of N-formylmethionyl-tRNA by promoting its recognition by IF2 and preventing the misappropriation of this tRNA by the elongation apparatus. The chain is Methionyl-tRNA formyltransferase from Lacticaseibacillus casei (strain BL23) (Lactobacillus casei).